Reading from the N-terminus, the 105-residue chain is Ketoisovalerate oxidoreductase subunit VorD (105 aa).

2 consecutive 4Fe-4S ferredoxin-type domains span residues Phe44–Asp73 and Gly74–Glu103. [4Fe-4S] cluster-binding residues include Cys53, Cys56, Cys59, Cys63, Cys83, Cys86, Cys89, and Cys93.

As to quaternary structure, heterotetramer of one alpha, one beta, one delta and one gamma chain. It depends on [4Fe-4S] cluster as a cofactor.

It catalyses the reaction 3-methyl-2-oxobutanoate + 2 oxidized [2Fe-2S]-[ferredoxin] + CoA = 2-methylpropanoyl-CoA + 2 reduced [2Fe-2S]-[ferredoxin] + CO2 + H(+). The polypeptide is Ketoisovalerate oxidoreductase subunit VorD (vorD) (Pyrococcus furiosus (strain ATCC 43587 / DSM 3638 / JCM 8422 / Vc1)).